Here is a 378-residue protein sequence, read N- to C-terminus: Succinyl-diaminopimelate desuccinylase (378 aa).

His66 contacts Zn(2+). Asp68 is an active-site residue. Asp100 is a Zn(2+) binding site. Glu134 serves as the catalytic Proton acceptor. Residues Glu135, Glu163, and His350 each coordinate Zn(2+).

This sequence belongs to the peptidase M20A family. DapE subfamily. In terms of assembly, homodimer. Requires Zn(2+) as cofactor. The cofactor is Co(2+).

It carries out the reaction N-succinyl-(2S,6S)-2,6-diaminopimelate + H2O = (2S,6S)-2,6-diaminopimelate + succinate. It participates in amino-acid biosynthesis; L-lysine biosynthesis via DAP pathway; LL-2,6-diaminopimelate from (S)-tetrahydrodipicolinate (succinylase route): step 3/3. Functionally, catalyzes the hydrolysis of N-succinyl-L,L-diaminopimelic acid (SDAP), forming succinate and LL-2,6-diaminopimelate (DAP), an intermediate involved in the bacterial biosynthesis of lysine and meso-diaminopimelic acid, an essential component of bacterial cell walls. The chain is Succinyl-diaminopimelate desuccinylase from Hydrogenovibrio crunogenus (strain DSM 25203 / XCL-2) (Thiomicrospira crunogena).